The chain runs to 1323 residues: ABC transporter C family member 12 (1323 aa).

Residues 110 to 396 (HCISLFFYSI…LPILIALGIQ (287 aa)) enclose the ABC transmembrane type-1 1 domain. Transmembrane regions (helical) follow at residues 111 to 131 (CISL…PEIL), 152 to 172 (MGYY…FCNY), 227 to 247 (VFGI…CLAL), 252 to 272 (IGWP…FNGL), 338 to 358 (ILIA…FSTY), and 375 to 395 (SYLN…ALGI). One can recognise an ABC transporter 1 domain in the interval 428-652 (VYMKNSTTTW…KLEFASLLQE (225 aa)). 464 to 471 (GSVGSGKS) contributes to the ATP binding site. The disordered stretch occupies residues 657–695 (ENTKGDDSDDDDDKKDDDKKEEKVEKPKQSDKDGTLISE). The segment covering 672–690 (DDDKKEEKVEKPKQSDKDG) has biased composition (basic and acidic residues). 5 helical membrane-spanning segments follow: residues 712–732 (VTAG…LETG), 772–792 (IYIG…FSFF), 840–860 (LIAT…ATLI), 862–882 (ISII…LFFI), and 952–972 (WLGL…CIFI). Positions 720–1010 (FLFAMILFLL…GVLQAADTET (291 aa)) constitute an ABC transmembrane type-1 2 domain. Positions 1047-1281 (IKFDNLVMRY…QNGLLTWLVN (235 aa)) constitute an ABC transporter 2 domain. 1081 to 1088 (GRTGAGKS) is an ATP binding site.

This sequence belongs to the ABC transporter superfamily. ABCC family. Conjugate transporter (TC 3.A.1.208) subfamily.

It is found in the membrane. This Dictyostelium discoideum (Social amoeba) protein is ABC transporter C family member 12 (abcC12).